The primary structure comprises 186 residues: Ribosome-recycling factor (186 aa).

It belongs to the RRF family.

It localises to the cytoplasm. Its function is as follows. Responsible for the release of ribosomes from messenger RNA at the termination of protein biosynthesis. May increase the efficiency of translation by recycling ribosomes from one round of translation to another. This Polynucleobacter asymbioticus (strain DSM 18221 / CIP 109841 / QLW-P1DMWA-1) (Polynucleobacter necessarius subsp. asymbioticus) protein is Ribosome-recycling factor.